The primary structure comprises 312 residues: Uracil-DNA glycosylase (312 aa).

Over residues 1–11 the composition is skewed to basic and acidic residues; sequence MSSACDHETEA. Positions 1 to 61 are disordered; that stretch reads MSSACDHETE…PPKRRRPCGL (61 aa). Polar residues predominate over residues 22–33; sequence EENGSNSSTPTS. Residue Asp155 is the Proton acceptor of the active site.

It belongs to the uracil-DNA glycosylase (UDG) superfamily. UNG family.

It localises to the host nucleus. The enzyme catalyses Hydrolyzes single-stranded DNA or mismatched double-stranded DNA and polynucleotides, releasing free uracil.. Functionally, excises uracil residues from the DNA which can arise as a result of misincorporation of dUMP residues by DNA polymerase or deamination of cytosines. Therefore may reduce deleterious uracil incorporation into the viral genome, particularly in terminally differentiated cells which lack DNA repair enzymes. The sequence is that of Uracil-DNA glycosylase (61) from Equine herpesvirus 1 (strain V592) (EHV-1).